A 363-amino-acid chain; its full sequence is DNA primase small subunit PriS (363 aa).

Residues D105, D107, and D265 contribute to the active site.

It belongs to the eukaryotic-type primase small subunit family. As to quaternary structure, heterodimer of a small subunit (PriS) and a large subunit (PriL). The cofactor is Mg(2+). Mn(2+) serves as cofactor.

Functionally, catalytic subunit of DNA primase, an RNA polymerase that catalyzes the synthesis of short RNA molecules used as primers for DNA polymerase during DNA replication. The small subunit contains the primase catalytic core and has DNA synthesis activity on its own. Binding to the large subunit stabilizes and modulates the activity, increasing the rate of DNA synthesis while decreasing the length of the DNA fragments, and conferring RNA synthesis capability. The DNA polymerase activity may enable DNA primase to also catalyze primer extension after primer synthesis. May also play a role in DNA repair. This is DNA primase small subunit PriS from Methanococcus maripaludis (strain C7 / ATCC BAA-1331).